We begin with the raw amino-acid sequence, 970 residues long: uncharacterized protein (970 aa).

Residues 12–32 (VIFFSVFFVIFFLFIESSVGF) form a helical membrane-spanning segment.

It to E.coli YtfN.

The protein resides in the membrane. This is an uncharacterized protein from Buchnera aphidicola subsp. Acyrthosiphon pisum (strain APS) (Acyrthosiphon pisum symbiotic bacterium).